Reading from the N-terminus, the 287-residue chain is 4-diphosphocytidyl-2-C-methyl-D-erythritol kinase (287 aa).

The active site involves K11. 93–103 (PFGAGLGGGSS) contacts ATP. D135 is an active-site residue.

The protein belongs to the GHMP kinase family. IspE subfamily.

The catalysed reaction is 4-CDP-2-C-methyl-D-erythritol + ATP = 4-CDP-2-C-methyl-D-erythritol 2-phosphate + ADP + H(+). It functions in the pathway isoprenoid biosynthesis; isopentenyl diphosphate biosynthesis via DXP pathway; isopentenyl diphosphate from 1-deoxy-D-xylulose 5-phosphate: step 3/6. Catalyzes the phosphorylation of the position 2 hydroxy group of 4-diphosphocytidyl-2C-methyl-D-erythritol. In Pelodictyon phaeoclathratiforme (strain DSM 5477 / BU-1), this protein is 4-diphosphocytidyl-2-C-methyl-D-erythritol kinase.